The chain runs to 303 residues: Serine/threonine-protein phosphatase PP-X homolog 2 (303 aa).

4 residues coordinate Mn(2+): Asp51, His53, Asp79, and Asn111. His112 functions as the Proton donor in the catalytic mechanism. Mn(2+) is bound by residues His161 and His235.

This sequence belongs to the PPP phosphatase family. PP-4 (PP-X) subfamily. It depends on Mn(2+) as a cofactor.

The catalysed reaction is O-phospho-L-seryl-[protein] + H2O = L-seryl-[protein] + phosphate. The enzyme catalyses O-phospho-L-threonyl-[protein] + H2O = L-threonyl-[protein] + phosphate. This Paramecium tetraurelia protein is Serine/threonine-protein phosphatase PP-X homolog 2 (Ppx2).